Here is a 526-residue protein sequence, read N- to C-terminus: Peptide chain release factor 3 (526 aa).

In terms of domain architecture, tr-type G spans 9–277; it reads DKRRTFAIIS…GIVEWAPKPL (269 aa). Residues 18–25, 86–90, and 140–143 contribute to the GTP site; these read SHPDAGKT, DTPGH, and NKLD.

Belongs to the TRAFAC class translation factor GTPase superfamily. Classic translation factor GTPase family. PrfC subfamily.

The protein resides in the cytoplasm. Increases the formation of ribosomal termination complexes and stimulates activities of RF-1 and RF-2. It binds guanine nucleotides and has strong preference for UGA stop codons. It may interact directly with the ribosome. The stimulation of RF-1 and RF-2 is significantly reduced by GTP and GDP, but not by GMP. This Shewanella sp. (strain MR-4) protein is Peptide chain release factor 3.